Here is a 689-residue protein sequence, read N- to C-terminus: Glycine--tRNA ligase beta subunit (689 aa).

It belongs to the class-II aminoacyl-tRNA synthetase family. Tetramer of two alpha and two beta subunits.

The protein resides in the cytoplasm. It catalyses the reaction tRNA(Gly) + glycine + ATP = glycyl-tRNA(Gly) + AMP + diphosphate. The chain is Glycine--tRNA ligase beta subunit from Salmonella choleraesuis (strain SC-B67).